Here is a 129-residue protein sequence, read N- to C-terminus: ATP synthase epsilon chain (129 aa).

This sequence belongs to the ATPase epsilon chain family. As to quaternary structure, F-type ATPases have 2 components, CF(1) - the catalytic core - and CF(0) - the membrane proton channel. CF(1) has five subunits: alpha(3), beta(3), gamma(1), delta(1), epsilon(1). CF(0) has three main subunits: a, b and c.

Its subcellular location is the cell inner membrane. Its function is as follows. Produces ATP from ADP in the presence of a proton gradient across the membrane. This chain is ATP synthase epsilon chain, found in Campylobacter jejuni subsp. jejuni serotype O:6 (strain 81116 / NCTC 11828).